Consider the following 362-residue polypeptide: N-acylethanolamine-hydrolyzing acid amidase (362 aa).

The first 33 residues, 1–33 (MGTPAIRAACHGAHLALALLLLLSLSDPWLWAT), serve as a signal peptide directing secretion. Residues Asn-42 and Asn-112 are each glycosylated (N-linked (GlcNAc...) asparagine). The active-site Nucleophile is Cys-131. Residues Asn-314 and Asn-338 are each glycosylated (N-linked (GlcNAc...) asparagine).

This sequence belongs to the acid ceramidase family. As to quaternary structure, heterodimer of an alpha and a beta subunit, produced by autocatalytic cleavage. Post-translationally, N-glycosylated. Tunicamycin treatment causes a reduction in specific activity against N-palmitoylethanolamine. Autoproteolytic cleavage at pH 4.5 gives rise to the alpha and beta subunit. Cleavage gives rise to a conformation change that activates the enzyme. The same catalytic Cys residue mediates the autoproteolytic cleavage and subsequent hydrolysis of lipid substrates. Expressed in brain, cecum, colon, heart, ileum, kidney, liver, lung, spleen, stomach, submaxillary gland, testis and thymus.

It is found in the lysosome. Its subcellular location is the membrane. It carries out the reaction N-hexadecanoylethanolamine + H2O = ethanolamine + hexadecanoate. The enzyme catalyses an N-(long-chain fatty acyl)ethanolamine + H2O = a long-chain fatty acid + ethanolamine. The catalysed reaction is N-dodecanoylethanolamine + H2O = dodecanoate + ethanolamine. It catalyses the reaction N-tetradecanoylethanolamine + H2O = tetradecanoate + ethanolamine. It carries out the reaction an N-acylsphing-4-enine + H2O = sphing-4-enine + a fatty acid. The enzyme catalyses N-hexadecanoylsphing-4-enine + H2O = sphing-4-enine + hexadecanoate. The catalysed reaction is N-dodecanoylsphing-4-enine + H2O = dodecanoate + sphing-4-enine. The protein operates within lipid metabolism; fatty acid metabolism. With respect to regulation, stimulated by DTT. Stimulated by nonionic detergent of the polyoxyethylenep-t-octylphenylether type (Triton X-100 or Nonidet P-40) whereas 3-[(3-cholamidopropyl)dimethylammonio]propane-1-sulfonate (CHAPS) and octyl alpha-D-glucopyranoside decrease the N-(long-chain-acyl)ethanolamine deacylase activity. Polysorbate 20 (Tween 20) is inhibitory. Stimulated by endogenous phospholipids such as choline- or ethanolamine-containing phospholipids, and dihydrolipoic acid. Its function is as follows. Degrades bioactive fatty acid amides to their corresponding acids, with the following preference: N-palmitoylethanolamine &gt; N-myristoylethanolamine &gt; N-stearoylethanolamine &gt; N-oleoylethanolamine &gt; N-linoleoylethanolamine &gt; N-arachidonoylethanolamine. The sequence is that of N-acylethanolamine-hydrolyzing acid amidase from Rattus norvegicus (Rat).